The sequence spans 97 residues: MSRINKEEVKKVAQLARLELNINEINNHAEQLEKILDYIRQLEKIDTDNVPCTTRAIEVINVFRKDEKKNYDRTEELLELGPSREDKYFKVPKIMNE.

It belongs to the GatC family. In terms of assembly, heterotrimer of A, B and C subunits.

It carries out the reaction L-glutamyl-tRNA(Gln) + L-glutamine + ATP + H2O = L-glutaminyl-tRNA(Gln) + L-glutamate + ADP + phosphate + H(+). The enzyme catalyses L-aspartyl-tRNA(Asn) + L-glutamine + ATP + H2O = L-asparaginyl-tRNA(Asn) + L-glutamate + ADP + phosphate + 2 H(+). In terms of biological role, allows the formation of correctly charged Asn-tRNA(Asn) or Gln-tRNA(Gln) through the transamidation of misacylated Asp-tRNA(Asn) or Glu-tRNA(Gln) in organisms which lack either or both of asparaginyl-tRNA or glutaminyl-tRNA synthetases. The reaction takes place in the presence of glutamine and ATP through an activated phospho-Asp-tRNA(Asn) or phospho-Glu-tRNA(Gln). This Prochlorococcus marinus (strain MIT 9215) protein is Aspartyl/glutamyl-tRNA(Asn/Gln) amidotransferase subunit C.